A 179-amino-acid chain; its full sequence is Alkyl hydroperoxide reductase AhpD (179 aa).

Residue cysteine 130 is the Proton donor of the active site. Residues cysteine 130 and cysteine 133 are joined by a disulfide bond. The active-site Cysteine sulfenic acid (-SOH) intermediate is the cysteine 133.

Belongs to the AhpD family. In terms of assembly, homotrimer.

It catalyses the reaction N(6)-[(R)-dihydrolipoyl]-L-lysyl-[lipoyl-carrier protein] + a hydroperoxide = N(6)-[(R)-lipoyl]-L-lysyl-[lipoyl-carrier protein] + an alcohol + H2O. In terms of biological role, antioxidant protein with alkyl hydroperoxidase activity. Required for the reduction of the AhpC active site cysteine residues and for the regeneration of the AhpC enzyme activity. The chain is Alkyl hydroperoxide reductase AhpD from Rhodococcus erythropolis (strain PR4 / NBRC 100887).